The sequence spans 227 residues: Orotate phosphoribosyltransferase (227 aa).

Lysine 26 provides a ligand contact to 5-phospho-alpha-D-ribose 1-diphosphate. 34–35 serves as a coordination point for orotate; it reads FF. 5-phospho-alpha-D-ribose 1-diphosphate-binding positions include 72–73, arginine 98, lysine 99, lysine 102, histidine 104, and 123–131; these read YK and DDVVSAGLS. The orotate site is built by serine 127 and arginine 155.

It belongs to the purine/pyrimidine phosphoribosyltransferase family. PyrE subfamily. In terms of assembly, homodimer. The cofactor is Mg(2+).

The enzyme catalyses orotidine 5'-phosphate + diphosphate = orotate + 5-phospho-alpha-D-ribose 1-diphosphate. Its pathway is pyrimidine metabolism; UMP biosynthesis via de novo pathway; UMP from orotate: step 1/2. Its function is as follows. Catalyzes the transfer of a ribosyl phosphate group from 5-phosphoribose 1-diphosphate to orotate, leading to the formation of orotidine monophosphate (OMP). This chain is Orotate phosphoribosyltransferase, found in Nitrosomonas europaea (strain ATCC 19718 / CIP 103999 / KCTC 2705 / NBRC 14298).